Here is a 477-residue protein sequence, read N- to C-terminus: Proton-coupled amino acid transporter 3 (477 aa).

The Cytoplasmic portion of the chain corresponds to 1–54; that stretch reads MGNVPLLREVGKCQRNMFGRSTASSKGSSNSRSSSSTSPKKGPRREADALMFIQ. The span at 19 to 40 shows a compositional bias: low complexity; the sequence is GRSTASSKGSSNSRSSSSTSPK. The segment at 19 to 43 is disordered; the sequence is GRSTASSKGSSNSRSSSSTSPKKGP. The helical transmembrane segment at 55 to 75 threads the bilayer; sequence IFIHLLKSNIGTGFLGLPLAV. At 76–77 the chain is on the extracellular side; the sequence is KN. Residues 78 to 98 form a helical membrane-spanning segment; that stretch reads AGLLVGPVSLLAIGALTVHCM. Over 99-144 the chain is Cytoplasmic; sequence DILLNCACHLTQRLQRSFVNYEETTMYSLETCPSPWLRTHSVWGRY. The chain crosses the membrane as a helical span at residues 145–165; that stretch reads VVSFLLIVTQLGFCSVYFMFL. At 166 to 202 the chain is on the extracellular side; that stretch reads ADNLQQIMEEAHFTSNVCQPRQSLVMTSILDTRFYML. A helical membrane pass occupies residues 203–223; it reads TILPFLILLVLIQNPQVLSIF. The Cytoplasmic portion of the chain corresponds to 224-225; sequence ST. The chain crosses the membrane as a helical span at residues 226–246; sequence LATITTLSSLALIFEYLIQTP. At 247 to 259 the chain is on the extracellular side; it reads HHSNLPLVANWKT. Residues 260–280 traverse the membrane as a helical segment; it reads FLLFFGTAIFTFEGVGMVLPL. Residues 281–291 are Cytoplasmic-facing; it reads KSQMKSPQQFP. The chain crosses the membrane as a helical span at residues 292-312; it reads AVLYLGMSFVIFLYICLGTLG. At 313 to 344 the chain is on the extracellular side; the sequence is YMKFGTDTQASITLNLPICWLYQSVKLMYSVG. The helical transmembrane segment at 345–365 threads the bilayer; it reads IFFTYALQFHVPAEIIVPYVV. Residues 366–374 lie on the Cytoplasmic side of the membrane; the sequence is SRVSENWAL. Residues 375 to 395 form a helical membrane-spanning segment; it reads FVDLTVRTALVCLTCFSAVLI. Residues 396 to 399 lie on the Extracellular side of the membrane; the sequence is PRLD. The helical transmembrane segment at 400-420 threads the bilayer; sequence LVISLVGSVSSSALAIIIPPL. The Cytoplasmic segment spans residues 421 to 432; sequence LEIATFYSENIS. A helical transmembrane segment spans residues 433 to 453; sequence CATIVKDIMISILGLLGCVLG. Topologically, residues 454 to 477 are extracellular; that stretch reads TYQALYEMTQQTHFYMANSTRVHI.

It belongs to the amino acid/polyamine transporter 2 family. In terms of tissue distribution, specifically expressed in testis.

The protein resides in the membrane. The polypeptide is Proton-coupled amino acid transporter 3 (Slc36a3) (Mus musculus (Mouse)).